The sequence spans 531 residues: High-affinity glucose transporter ght2 (531 aa).

Residues 5-13 (RGKNFTLVM) lie on the Cytoplasmic side of the membrane. Residues 14–34 (LIFVSMAGWMFGADTGSIGGV) form a helical membrane-spanning segment. Topologically, residues 35-62 (TSMRDFRERYADRYDPITDQYSLSSARQ) are extracellular. A helical transmembrane segment spans residues 63 to 83 (GLLTGMVNVGSLFGCIISSPI). Topologically, residues 84–91 (ADRFGKRL) are cytoplasmic. Residues 92-112 (SIIGFCAVYIIGIIVQVTAVP) form a helical membrane-spanning segment. The Extracellular segment spans residues 113–116 (SWVQ). Residues 117 to 137 (IMVAKIWTGIGIGALSVLAPG) traverse the membrane as a helical segment. Over 138 to 148 (YQSETAPPSIR) the chain is Cytoplasmic. A helical transmembrane segment spans residues 149–169 (GTVVVTYQLFVTGGIFIAACI). At 170–183 (NMGTHKLHKTAQWR) the chain is on the extracellular side. A helical transmembrane segment spans residues 184–204 (VSIGINLLWGIITMIGILFLP). The Cytoplasmic segment spans residues 205–270 (ESPRYLIQVG…IFGKDIRYRT (66 aa)). The helical transmembrane segment at 271–289 (FLGMFVMSLQQLTGNNYFF) threads the bilayer. Residues 290–305 (YYGFSVMQGAGINSPY) lie on the Extracellular side of the membrane. Residues 306 to 326 (LSAMILDAVNFGCTFGGMYVL) traverse the membrane as a helical segment. Over 327–332 (ERFGRR) the chain is Cytoplasmic. The chain crosses the membrane as a helical span at residues 333–353 (NPLIIGGIWQSICFFIYSAVG). At 354 to 367 (SRALYHKNGTSNTR) the chain is on the extracellular side. Residue Asn361 is glycosylated (N-linked (GlcNAc...) asparagine). Residues 368-388 (AGAVMIVMACLFIFGFAQTWA) form a helical membrane-spanning segment. Residues 389–408 (PAAYVIVGESYPVRYRSKCA) are Cytoplasmic-facing. The chain crosses the membrane as a helical span at residues 409 to 429 (AVATASNWLWNFLISFFTPFI). Residues 430–436 (QASIGFK) lie on the Extracellular side of the membrane. A helical transmembrane segment spans residues 437-457 (YGYVFASCNLTGAIVIFLFAK). At 458 to 531 (ETKGLTLEEI…QYSSHEEDYA (74 aa)) the chain is on the cytoplasmic side. The interval 491-531 (KKVEKEKSRKGGARGESVEYVERASNTDSSPQYSSHEEDYA) is disordered. Phosphoserine occurs at positions 507, 515, 519, and 520. Residues 514 to 524 (ASNTDSSPQYS) are compositionally biased toward polar residues. Tyr523 carries the phosphotyrosine modification.

The protein belongs to the major facilitator superfamily. Sugar transporter (TC 2.A.1.1) family.

The protein localises to the membrane. Functionally, high-affinity glucose transporter. The chain is High-affinity glucose transporter ght2 (ght2) from Schizosaccharomyces pombe (strain 972 / ATCC 24843) (Fission yeast).